The following is a 185-amino-acid chain: Elongation factor P (185 aa).

This sequence belongs to the elongation factor P family.

The protein localises to the cytoplasm. It functions in the pathway protein biosynthesis; polypeptide chain elongation. Its function is as follows. Involved in peptide bond synthesis. Stimulates efficient translation and peptide-bond synthesis on native or reconstituted 70S ribosomes in vitro. Probably functions indirectly by altering the affinity of the ribosome for aminoacyl-tRNA, thus increasing their reactivity as acceptors for peptidyl transferase. The protein is Elongation factor P of Nitrosomonas europaea (strain ATCC 19718 / CIP 103999 / KCTC 2705 / NBRC 14298).